Reading from the N-terminus, the 811-residue chain is Ribonucleoside-diphosphate reductase large chain (811 aa).

The 92-residue stretch at 1–92 (MFVYKRDGRQ…VSNLHKQTEK (92 aa)) folds into the ATP-cone domain. ATP-binding positions include 5 to 6 (KR), 11 to 17 (EKVAFDK), threonine 53, and aspartate 57. Positions 202 and 217 each coordinate GDP. An intrachain disulfide couples cysteine 218 to cysteine 444. DTTP-binding positions include 226 to 228 (DSI), lysine 243, arginine 256, and 263 to 264 (AG). GDP is bound at residue asparagine 427. Catalysis depends on asparagine 427, which acts as the Proton acceptor. The Cysteine radical intermediate role is filled by cysteine 429. GDP-binding positions include glutamate 431 and 603 to 606 (TAST). Residue glutamate 431 is the Proton acceptor of the active site.

It belongs to the ribonucleoside diphosphate reductase large chain family. Heterodimer of a large and a small subunit. Interacts with SPD1.

The catalysed reaction is a 2'-deoxyribonucleoside 5'-diphosphate + [thioredoxin]-disulfide + H2O = a ribonucleoside 5'-diphosphate + [thioredoxin]-dithiol. Its activity is regulated as follows. Under complex allosteric control mediated by deoxynucleoside triphosphates and ATP binding to separate specificity and activation sites on the large subunit. The type of nucleotide bound at the specificity site determines substrate preference. It seems probable that ATP makes the enzyme reduce CDP and UDP, dGTP favors ADP reduction and dTTP favors GDP reduction. Stimulated by ATP and inhibited by dATP binding to the activity site. Functionally, provides the precursors necessary for DNA synthesis. Catalyzes the biosynthesis of deoxyribonucleotides from the corresponding ribonucleotides. In Schizosaccharomyces pombe (strain 972 / ATCC 24843) (Fission yeast), this protein is Ribonucleoside-diphosphate reductase large chain (cdc22).